The following is a 547-amino-acid chain: Chaperonin GroEL 3 (547 aa).

ATP is bound by residues 30 to 33 (TLGP), K51, 87 to 91 (DGTTT), G415, and D496.

Belongs to the chaperonin (HSP60) family. Forms a cylinder of 14 subunits composed of two heptameric rings stacked back-to-back. Interacts with the co-chaperonin GroES.

Its subcellular location is the cytoplasm. The enzyme catalyses ATP + H2O + a folded polypeptide = ADP + phosphate + an unfolded polypeptide.. Functionally, together with its co-chaperonin GroES, plays an essential role in assisting protein folding. The GroEL-GroES system forms a nano-cage that allows encapsulation of the non-native substrate proteins and provides a physical environment optimized to promote and accelerate protein folding. In Bradyrhizobium sp. (strain ORS 278), this protein is Chaperonin GroEL 3.